The chain runs to 180 residues: UPF0303 protein PSEEN3311 (180 aa).

Belongs to the UPF0303 family.

This Pseudomonas entomophila (strain L48) protein is UPF0303 protein PSEEN3311.